A 157-amino-acid polypeptide reads, in one-letter code: S-ribosylhomocysteine lyase (157 aa).

3 residues coordinate Fe cation: His54, His58, and Cys124.

This sequence belongs to the LuxS family. Homodimer. Fe cation serves as cofactor.

It carries out the reaction S-(5-deoxy-D-ribos-5-yl)-L-homocysteine = (S)-4,5-dihydroxypentane-2,3-dione + L-homocysteine. In terms of biological role, involved in the synthesis of autoinducer 2 (AI-2) which is secreted by bacteria and is used to communicate both the cell density and the metabolic potential of the environment. The regulation of gene expression in response to changes in cell density is called quorum sensing. Catalyzes the transformation of S-ribosylhomocysteine (RHC) to homocysteine (HC) and 4,5-dihydroxy-2,3-pentadione (DPD). The sequence is that of S-ribosylhomocysteine lyase from Levilactobacillus brevis (strain ATCC 367 / BCRC 12310 / CIP 105137 / JCM 1170 / LMG 11437 / NCIMB 947 / NCTC 947) (Lactobacillus brevis).